Consider the following 484-residue polypeptide: HTH-type transcriptional regulator TauR (484 aa).

An HTH gntR-type domain is found at 16-84; it reads GSLQHRLRQM…GRSGTFVSAA (69 aa). Positions 44–63 form a DNA-binding region, H-T-H motif; it reads TRALAAHLGVARITVTLAYA. Lysine 330 bears the N6-(pyridoxal phosphate)lysine mark.

It in the C-terminal section; belongs to the class-I pyridoxal-phosphate-dependent aminotransferase family. Requires pyridoxal 5'-phosphate as cofactor.

Its function is as follows. Transcriptional activator, which is essential for taurine-dependent expression of the tpa-tauR-xsc operon. Acts by binding to direct repeats in the promoter region. The protein is HTH-type transcriptional regulator TauR of Rhodobacter capsulatus (strain ATCC BAA-309 / NBRC 16581 / SB1003).